Reading from the N-terminus, the 394-residue chain is Elongation factor Tu (394 aa).

Residues 10–204 (KPHINVGTIG…ALDNYIPEPK (195 aa)) form the tr-type G domain. A G1 region spans residues 19 to 26 (GHVDHGKT). 19 to 26 (GHVDHGKT) contributes to the GTP binding site. Thr-26 is a binding site for Mg(2+). Residues 60 to 64 (GITIN) are G2. The segment at 81–84 (DCPG) is G3. GTP is bound by residues 81–85 (DCPGH) and 136–139 (NKCD). The G4 stretch occupies residues 136-139 (NKCD). The segment at 174 to 176 (SAL) is G5.

Belongs to the TRAFAC class translation factor GTPase superfamily. Classic translation factor GTPase family. EF-Tu/EF-1A subfamily. In terms of assembly, monomer.

The protein localises to the cytoplasm. It catalyses the reaction GTP + H2O = GDP + phosphate + H(+). Its function is as follows. GTP hydrolase that promotes the GTP-dependent binding of aminoacyl-tRNA to the A-site of ribosomes during protein biosynthesis. This Blochmanniella pennsylvanica (strain BPEN) protein is Elongation factor Tu.